The primary structure comprises 57 residues: Serine protease inhibitor Kazal-type 1 (57 aa).

The Kazal-like domain maps to L4–C57. 3 cysteine pairs are disulfide-bonded: C10/C39, C17/C36, and C25/C57.

It is found in the secreted. Its function is as follows. Serine protease inhibitor which exhibits anti-trypsin activity. In the pancreas, protects against trypsin-catalyzed premature activation of zymogens. In terms of biological role, in the male reproductive tract, binds to sperm heads where it modulates sperm capacitance by inhibiting calcium uptake and nitrogen oxide (NO) production. The sequence is that of Serine protease inhibitor Kazal-type 1 (SPINK1) from Canis lupus familiaris (Dog).